We begin with the raw amino-acid sequence, 124 residues long: Large ribosomal subunit protein bL12 (124 aa).

This sequence belongs to the bacterial ribosomal protein bL12 family. In terms of assembly, homodimer. Part of the ribosomal stalk of the 50S ribosomal subunit. Forms a multimeric L10(L12)X complex, where L10 forms an elongated spine to which 2 to 4 L12 dimers bind in a sequential fashion. Binds GTP-bound translation factors.

Forms part of the ribosomal stalk which helps the ribosome interact with GTP-bound translation factors. Is thus essential for accurate translation. This is Large ribosomal subunit protein bL12 from Burkholderia ambifaria (strain MC40-6).